Consider the following 870-residue polypeptide: Glycerol-3-phosphate acyltransferase (870 aa).

Positions 1–27 (MPKKNSPLLPKETTPTQSSVDTSGSSN) are disordered. The segment covering 13–27 (TTPTQSSVDTSGSSN) has biased composition (polar residues). Positions 351–356 (HRSHID) match the HXXXXD motif motif.

It belongs to the GPAT/DAPAT family.

The protein resides in the cell inner membrane. The catalysed reaction is sn-glycerol 3-phosphate + an acyl-CoA = a 1-acyl-sn-glycero-3-phosphate + CoA. The protein operates within phospholipid metabolism; CDP-diacylglycerol biosynthesis; CDP-diacylglycerol from sn-glycerol 3-phosphate: step 1/3. The protein is Glycerol-3-phosphate acyltransferase (plsB) of Xylella fastidiosa (strain 9a5c).